The chain runs to 375 residues: Probable RNA 3'-terminal phosphate cyclase-like protein (375 aa).

This sequence belongs to the RNA 3'-terminal cyclase family. Type 2 subfamily.

The protein resides in the nucleus. Its subcellular location is the nucleolus. Functionally, does not have cyclase activity. Plays a role in 40S-ribosomal-subunit biogenesis in the early pre-rRNA processing steps at sites A0, A1 and A2 that are required for proper maturation of the 18S RNA. This is Probable RNA 3'-terminal phosphate cyclase-like protein from Arabidopsis thaliana (Mouse-ear cress).